A 197-amino-acid chain; its full sequence is 3-isopropylmalate dehydratase small subunit (197 aa).

The protein belongs to the LeuD family. LeuD type 1 subfamily. In terms of assembly, heterodimer of LeuC and LeuD.

It catalyses the reaction (2R,3S)-3-isopropylmalate = (2S)-2-isopropylmalate. It functions in the pathway amino-acid biosynthesis; L-leucine biosynthesis; L-leucine from 3-methyl-2-oxobutanoate: step 2/4. In terms of biological role, catalyzes the isomerization between 2-isopropylmalate and 3-isopropylmalate, via the formation of 2-isopropylmaleate. The sequence is that of 3-isopropylmalate dehydratase small subunit from Streptococcus suis (strain 98HAH33).